Here is a 778-residue protein sequence, read N- to C-terminus: ATP synthase subunit beta (778 aa).

The interval 1-289 (MKENNKTIEA…IDIYEENEDL (289 aa)) is unknown. Residues 290 to 778 (MKLNTLKSDK…KPLNSENKSN (489 aa)) form an ATP synthase subunit beta region. 447–454 (GGAGVGKT) provides a ligand contact to ATP.

This sequence belongs to the ATPase alpha/beta chains family. In terms of assembly, F-type ATPases have 2 components, CF(1) - the catalytic core - and CF(0) - the membrane proton channel. CF(1) has five subunits: alpha(3), beta(3), gamma(1), delta(1), epsilon(1). CF(0) has three main subunits: a(1), b(2) and c(9-12). The alpha and beta chains form an alternating ring which encloses part of the gamma chain. CF(1) is attached to CF(0) by a central stalk formed by the gamma and epsilon chains, while a peripheral stalk is formed by the delta and b chains.

It is found in the cell membrane. It catalyses the reaction ATP + H2O + 4 H(+)(in) = ADP + phosphate + 5 H(+)(out). Produces ATP from ADP in the presence of a proton gradient across the membrane. The catalytic sites are hosted primarily by the beta subunits. This Malacoplasma penetrans (strain HF-2) (Mycoplasma penetrans) protein is ATP synthase subunit beta (atpD).